The following is a 2748-amino-acid chain: Nuclear migration protein NUM1 (2748 aa).

Residues methionine 1–asparagine 10 show a composition bias toward basic residues. Disordered stretches follow at residues methionine 1–asparagine 36 and tyrosine 290–serine 312. Polar residues predominate over residues alanine 17–asparagine 36. A compositionally biased stretch (low complexity) spans lysine 293 to aspartate 304. 12 tandem repeats follow at residues proline 593–glutamine 656, proline 657–glutamine 727, proline 728–glutamine 798, proline 799–glutamine 862, proline 863–glutamine 926, proline 927–glutamine 990, proline 991–glutamine 1054, proline 1055–glutamine 1118, proline 1119–glutamine 1182, proline 1183–glutamine 1246, proline 1247–glutamine 1310, and proline 1311–glutamine 1374. The interval proline 593 to alanine 1384 is 13 X tandem repeats. A phosphoserine mark is found at serine 611, serine 675, and serine 746. Serine 881, serine 945, and serine 1009 each carry phosphoserine. Phosphoserine is present on residues serine 1201, serine 1265, and serine 1329. One copy of the 13; truncated repeat lies at proline 1375 to alanine 1384. The tract at residues glutamate 2111–serine 2133 is disordered. Low complexity predominate over residues asparagine 2122 to serine 2133. A phosphoserine mark is found at serine 2162, serine 2164, serine 2197, serine 2217, serine 2220, serine 2221, serine 2360, and serine 2424. Positions lysine 2444–serine 2460 are enriched in basic and acidic residues. A disordered region spans residues lysine 2444 to arginine 2536. Residues asparagine 2465–serine 2474 are compositionally biased toward polar residues. The segment covering serine 2492–histidine 2503 has biased composition (basic and acidic residues). Residue serine 2494 is modified to Phosphoserine. Over residues arginine 2504 to glutamine 2514 the composition is skewed to basic residues. Residues serine 2516–threonine 2532 are compositionally biased toward low complexity. Phosphoserine is present on serine 2545. The 111-residue stretch at glutamine 2573–glutamine 2683 folds into the PH domain. Positions isoleucine 2707–arginine 2748 are disordered. The span at lysine 2720–serine 2730 shows a compositional bias: low complexity.

Interacts with PAC11 when DYN1 is present, and TUB3.

Its subcellular location is the bud tip. Its function is as follows. Controls nuclear migration. NUM1 specifically controls the interaction of the bud neck cytoskeleton with the pre-divisional G2 nucleus. Functions in dynein-anchoring. During late anaphase forms dynein-interacting cortical microtubule capture sites at both cellular poles. This leads to dynein-dependent sliding of the microtubules in the bud. The polypeptide is Nuclear migration protein NUM1 (NUM1) (Saccharomyces cerevisiae (strain ATCC 204508 / S288c) (Baker's yeast)).